We begin with the raw amino-acid sequence, 456 residues long: ATP synthase subunit beta 1 (456 aa).

Position 152 to 159 (152 to 159 (GGAGVGKS)) interacts with ATP.

Belongs to the ATPase alpha/beta chains family. F-type ATPases have 2 components, CF(1) - the catalytic core - and CF(0) - the membrane proton channel. CF(1) has five subunits: alpha(3), beta(3), gamma(1), delta(1), epsilon(1). CF(0) has three main subunits: a(1), b(2) and c(9-12). The alpha and beta chains form an alternating ring which encloses part of the gamma chain. CF(1) is attached to CF(0) by a central stalk formed by the gamma and epsilon chains, while a peripheral stalk is formed by the delta and b chains.

The protein resides in the cell membrane. It carries out the reaction ATP + H2O + 4 H(+)(in) = ADP + phosphate + 5 H(+)(out). In terms of biological role, produces ATP from ADP in the presence of a proton gradient across the membrane. The catalytic sites are hosted primarily by the beta subunits. This Listeria monocytogenes serotype 4b (strain F2365) protein is ATP synthase subunit beta 1.